We begin with the raw amino-acid sequence, 518 residues long: Metal transporter Nramp1 (518 aa).

A run of 12 helical transmembrane segments spans residues 35 to 55 (FLSH…PGNM), 68 to 88 (ELLW…SLSA), 107 to 127 (PVWV…ASDI), 131 to 151 (IGTG…GVLI), 172 to 192 (VVVA…MSIV), 218 to 238 (IALL…ALVL), 255 to 275 (FFLF…IAII), 315 to 337 (SATV…GTYA), 357 to 377 (LMTR…GGSS), 382 to 402 (LIVI…IPLL), 418 to 438 (IYIV…NIYF), and 458 to 478 (VLIG…VIYL).

The protein belongs to the NRAMP (TC 2.A.55) family.

Its subcellular location is the membrane. Functionally, probable metal transporter that may participate in the control of iron homeostasis. This Oryza sativa subsp. japonica (Rice) protein is Metal transporter Nramp1 (NRAMP1).